Here is a 407-residue protein sequence, read N- to C-terminus: Probable tRNA sulfurtransferase (407 aa).

The THUMP domain occupies 61–165; it reads NEITYRLSKI…LDAIYMYEEV (105 aa). ATP-binding positions include 183 to 184, 208 to 209, R265, G287, and Q296; these read ML and HF.

The protein belongs to the ThiI family.

Its subcellular location is the cytoplasm. The enzyme catalyses [ThiI sulfur-carrier protein]-S-sulfanyl-L-cysteine + a uridine in tRNA + 2 reduced [2Fe-2S]-[ferredoxin] + ATP + H(+) = [ThiI sulfur-carrier protein]-L-cysteine + a 4-thiouridine in tRNA + 2 oxidized [2Fe-2S]-[ferredoxin] + AMP + diphosphate. It catalyses the reaction [ThiS sulfur-carrier protein]-C-terminal Gly-Gly-AMP + S-sulfanyl-L-cysteinyl-[cysteine desulfurase] + AH2 = [ThiS sulfur-carrier protein]-C-terminal-Gly-aminoethanethioate + L-cysteinyl-[cysteine desulfurase] + A + AMP + 2 H(+). It functions in the pathway cofactor biosynthesis; thiamine diphosphate biosynthesis. Catalyzes the ATP-dependent transfer of a sulfur to tRNA to produce 4-thiouridine in position 8 of tRNAs, which functions as a near-UV photosensor. Also catalyzes the transfer of sulfur to the sulfur carrier protein ThiS, forming ThiS-thiocarboxylate. This is a step in the synthesis of thiazole, in the thiamine biosynthesis pathway. The sulfur is donated as persulfide by IscS. This is Probable tRNA sulfurtransferase from Staphylococcus aureus (strain NCTC 8325 / PS 47).